We begin with the raw amino-acid sequence, 405 residues long: Tyrosine--tRNA ligase (405 aa).

A 'HIGH' region motif is present at residues 46–55; that stretch reads PTRPDIHLGH. The 'KMSKS' region signature appears at 230 to 234; it reads KMSKS. Lys-233 provides a ligand contact to ATP. Residues 341–404 enclose the S4 RNA-binding domain; that stretch reads MGLAALMVKA…GKKKFVKIVV (64 aa).

The protein belongs to the class-I aminoacyl-tRNA synthetase family. TyrS type 2 subfamily. In terms of assembly, homodimer.

It localises to the cytoplasm. It catalyses the reaction tRNA(Tyr) + L-tyrosine + ATP = L-tyrosyl-tRNA(Tyr) + AMP + diphosphate + H(+). Its function is as follows. Catalyzes the attachment of tyrosine to tRNA(Tyr) in a two-step reaction: tyrosine is first activated by ATP to form Tyr-AMP and then transferred to the acceptor end of tRNA(Tyr). The chain is Tyrosine--tRNA ligase from Bdellovibrio bacteriovorus (strain ATCC 15356 / DSM 50701 / NCIMB 9529 / HD100).